Consider the following 345-residue polypeptide: NADH-quinone oxidoreductase subunit 8 (345 aa).

A run of 8 helical transmembrane segments spans residues 15–35 (MLLQ…FMVY), 82–102 (FVYF…FVVI), 115–135 (VGIL…IMGG), 161–181 (LGLI…TAIV), 190–210 (LLNW…VSAL), 240–262 (YLLF…SLLF), 278–298 (WWMV…KAIV), and 309–329 (IGWK…AILA).

Belongs to the complex I subunit 1 family. In terms of assembly, NDH-1 is composed of at least 14 different subunits, Nqo1 to Nqo14. The complex has a L-shaped structure, with the hydrophobic arm (subunits Nqo7, Nqo8, Nqo10 to Nqo14) embedded in the inner membrane and the hydrophilic peripheral arm (subunits Nqo1 to Nqo6, Nqo9) protruding into the bacterial cytoplasm. The hydrophilic domain contains all the redox centers.

The protein resides in the cell inner membrane. The enzyme catalyses a quinone + NADH + 5 H(+)(in) = a quinol + NAD(+) + 4 H(+)(out). Functionally, NDH-1 shuttles electrons from NADH, via FMN and iron-sulfur (Fe-S) centers, to quinones in the respiratory chain. The immediate electron acceptor for the enzyme in this species is believed to be ubiquinone. Couples the redox reaction to proton translocation (for every two electrons transferred, four hydrogen ions are translocated across the cytoplasmic membrane), and thus conserves the redox energy in a proton gradient. The protein is NADH-quinone oxidoreductase subunit 8 of Paracoccus denitrificans.